Here is a 436-residue protein sequence, read N- to C-terminus: GTPase Der (436 aa).

EngA-type G domains are found at residues Ser-4 to Ser-167 and Ile-176 to Thr-351. GTP contacts are provided by residues Gly-10–Ser-17, Asp-57–Ile-61, Asn-119–Asp-122, Gly-182–Ser-189, Asp-229–Met-233, and Asn-294–Asp-297. Positions Lys-352 to Gln-436 constitute a KH-like domain.

Belongs to the TRAFAC class TrmE-Era-EngA-EngB-Septin-like GTPase superfamily. EngA (Der) GTPase family. As to quaternary structure, associates with the 50S ribosomal subunit.

Its function is as follows. GTPase that plays an essential role in the late steps of ribosome biogenesis. The protein is GTPase Der of Oceanobacillus iheyensis (strain DSM 14371 / CIP 107618 / JCM 11309 / KCTC 3954 / HTE831).